A 123-amino-acid chain; its full sequence is Putative iron-sulfur cluster insertion protein ErpA (123 aa).

Iron-sulfur cluster is bound by residues C51, C115, and C117.

It belongs to the HesB/IscA family. Homodimer. Requires iron-sulfur cluster as cofactor.

Its function is as follows. Required for insertion of 4Fe-4S clusters. The polypeptide is Putative iron-sulfur cluster insertion protein ErpA (Burkholderia lata (strain ATCC 17760 / DSM 23089 / LMG 22485 / NCIMB 9086 / R18194 / 383)).